A 657-amino-acid chain; its full sequence is DNA mismatch repair protein MutL (657 aa).

It belongs to the DNA mismatch repair MutL/HexB family.

Its function is as follows. This protein is involved in the repair of mismatches in DNA. It is required for dam-dependent methyl-directed DNA mismatch repair. May act as a 'molecular matchmaker', a protein that promotes the formation of a stable complex between two or more DNA-binding proteins in an ATP-dependent manner without itself being part of a final effector complex. The sequence is that of DNA mismatch repair protein MutL from Streptococcus agalactiae serotype Ia (strain ATCC 27591 / A909 / CDC SS700).